The following is a 186-amino-acid chain: NADH-quinone oxidoreductase subunit C (186 aa).

Residues 166–186 (DSLTPWKGVGRPSDPFDGRKE) form a disordered region.

It belongs to the complex I 30 kDa subunit family. NDH-1 is composed of 14 different subunits. Subunits NuoB, C, D, E, F, and G constitute the peripheral sector of the complex.

It is found in the cell inner membrane. The enzyme catalyses a quinone + NADH + 5 H(+)(in) = a quinol + NAD(+) + 4 H(+)(out). In terms of biological role, NDH-1 shuttles electrons from NADH, via FMN and iron-sulfur (Fe-S) centers, to quinones in the respiratory chain. The immediate electron acceptor for the enzyme in this species is believed to be ubiquinone. Couples the redox reaction to proton translocation (for every two electrons transferred, four hydrogen ions are translocated across the cytoplasmic membrane), and thus conserves the redox energy in a proton gradient. This chain is NADH-quinone oxidoreductase subunit C, found in Neorickettsia sennetsu (strain ATCC VR-367 / Miyayama) (Ehrlichia sennetsu).